The chain runs to 474 residues: Glutamate--tRNA ligase (474 aa).

The 'HIGH' region signature appears at 9 to 19; sequence PSPTGFLHVGG. The 'KMSKS' region signature appears at 240–244; it reads KLSKR. Lys243 serves as a coordination point for ATP.

This sequence belongs to the class-I aminoacyl-tRNA synthetase family. Glutamate--tRNA ligase type 1 subfamily. Monomer.

Its subcellular location is the cytoplasm. It catalyses the reaction tRNA(Glu) + L-glutamate + ATP = L-glutamyl-tRNA(Glu) + AMP + diphosphate. Catalyzes the attachment of glutamate to tRNA(Glu) in a two-step reaction: glutamate is first activated by ATP to form Glu-AMP and then transferred to the acceptor end of tRNA(Glu). The protein is Glutamate--tRNA ligase of Photobacterium profundum (strain SS9).